The following is a 294-amino-acid chain: Lipoyl synthase (294 aa).

Cysteine 35, cysteine 40, cysteine 46, cysteine 61, cysteine 65, cysteine 68, and serine 275 together coordinate [4Fe-4S] cluster. The 219-residue stretch at 46 to 264 (CWGGGTATVM…REAGLGLGFR (219 aa)) folds into the Radical SAM core domain.

This sequence belongs to the radical SAM superfamily. Lipoyl synthase family. It depends on [4Fe-4S] cluster as a cofactor.

Its subcellular location is the cytoplasm. It carries out the reaction [[Fe-S] cluster scaffold protein carrying a second [4Fe-4S](2+) cluster] + N(6)-octanoyl-L-lysyl-[protein] + 2 oxidized [2Fe-2S]-[ferredoxin] + 2 S-adenosyl-L-methionine + 4 H(+) = [[Fe-S] cluster scaffold protein] + N(6)-[(R)-dihydrolipoyl]-L-lysyl-[protein] + 4 Fe(3+) + 2 hydrogen sulfide + 2 5'-deoxyadenosine + 2 L-methionine + 2 reduced [2Fe-2S]-[ferredoxin]. Its pathway is protein modification; protein lipoylation via endogenous pathway; protein N(6)-(lipoyl)lysine from octanoyl-[acyl-carrier-protein]: step 2/2. Functionally, catalyzes the radical-mediated insertion of two sulfur atoms into the C-6 and C-8 positions of the octanoyl moiety bound to the lipoyl domains of lipoate-dependent enzymes, thereby converting the octanoylated domains into lipoylated derivatives. In Anaeromyxobacter sp. (strain Fw109-5), this protein is Lipoyl synthase.